The following is a 794-amino-acid chain: Zinc finger protein 148 (794 aa).

Lys6 participates in a covalent cross-link: Glycyl lysine isopeptide (Lys-Gly) (interchain with G-Cter in SUMO2). Position 51 is a phosphoserine (Ser51). Glycyl lysine isopeptide (Lys-Gly) (interchain with G-Cter in SUMO2) cross-links involve residues Lys88, Lys115, and Lys132. A C2H2-type 1 zinc finger spans residues 171 to 193 (HVCEHCNAAFRTNYHLQRHVFIH). Thr194 carries the phosphothreonine modification. 2 consecutive C2H2-type zinc fingers follow at residues 199–221 (FQCSQCDMRFIQKYLLQRHEKIH) and 227–249 (FRCDECGMRFIQKYHMERHKRTH). Ser250 is subject to Phosphoserine. The segment at 255 to 278 (YQCEYCLQYFSRTDRVLKHKRMCH) adopts a C2H2-type 4 zinc-finger fold. A Glycyl lysine isopeptide (Lys-Gly) (interchain with G-Cter in SUMO2) cross-link involves residue Lys291. The segment at 298 to 338 (EEDSGFSTSPKDNSLPKKKRQKTEKKSSGMDKESSLDKSDL) is disordered. Phosphoserine is present on residues Ser301 and Ser306. Lys308 is covalently cross-linked (Glycyl lysine isopeptide (Lys-Gly) (interchain with G-Cter in SUMO2)). Residues 321–338 (EKKSSGMDKESSLDKSDL) are compositionally biased toward basic and acidic residues. Lys356 is covalently cross-linked (Glycyl lysine isopeptide (Lys-Gly) (interchain with G-Cter in SUMO1); alternate). Residue Lys356 forms a Glycyl lysine isopeptide (Lys-Gly) (interchain with G-Cter in SUMO2); alternate linkage. A Glycyl lysine isopeptide (Lys-Gly) (interchain with G-Cter in SUMO2) cross-link involves residue Lys402. A Phosphoserine modification is found at Ser412. Residues Lys421 and Lys424 each participate in a glycyl lysine isopeptide (Lys-Gly) (interchain with G-Cter in SUMO2) cross-link. The span at 575 to 588 (SSEVPEVTQSENVG) shows a compositional bias: polar residues. Residues 575–596 (SSEVPEVTQSENVGSSSQASSS) are disordered. Lys607 bears the N6-acetyllysine mark. A phosphoserine mark is found at Ser665 and Ser784. A disordered region spans residues 775 to 794 (NDNRAGMTSSPDATTGQTFG).

Belongs to the krueppel C2H2-type zinc-finger protein family. In terms of assembly, interacts with HNRNPDL. Interacts with the 5FMC complex; the interaction requires association with CHTOP. Interacts with CAVIN1. In terms of processing, sumoylated with SUMO2. Desumoylated by SENP3, resulting in the stimulation of transcription of its target genes.

The protein resides in the nucleus. Its function is as follows. Involved in transcriptional regulation. Represses the transcription of a number of genes including gastrin, stromelysin and enolase. Binds to the G-rich box in the enhancer region of these genes. In Bos taurus (Bovine), this protein is Zinc finger protein 148 (ZNF148).